The sequence spans 153 residues: D-aminoacyl-tRNA deacylase (153 aa).

The Gly-cisPro motif, important for rejection of L-amino acids motif lies at 137–138 (GP).

The protein belongs to the DTD family. In terms of assembly, homodimer.

The protein resides in the cytoplasm. It carries out the reaction glycyl-tRNA(Ala) + H2O = tRNA(Ala) + glycine + H(+). The enzyme catalyses a D-aminoacyl-tRNA + H2O = a tRNA + a D-alpha-amino acid + H(+). Its function is as follows. An aminoacyl-tRNA editing enzyme that deacylates mischarged D-aminoacyl-tRNAs. Also deacylates mischarged glycyl-tRNA(Ala), protecting cells against glycine mischarging by AlaRS. Acts via tRNA-based rather than protein-based catalysis; rejects L-amino acids rather than detecting D-amino acids in the active site. By recycling D-aminoacyl-tRNA to D-amino acids and free tRNA molecules, this enzyme counteracts the toxicity associated with the formation of D-aminoacyl-tRNA entities in vivo and helps enforce protein L-homochirality. This Dehalococcoides mccartyi (strain ATCC BAA-2100 / JCM 16839 / KCTC 5957 / BAV1) protein is D-aminoacyl-tRNA deacylase.